The chain runs to 144 residues: Large ribosomal subunit protein uL11 (144 aa).

Belongs to the universal ribosomal protein uL11 family. As to quaternary structure, part of the ribosomal stalk of the 50S ribosomal subunit. Interacts with L10 and the large rRNA to form the base of the stalk. L10 forms an elongated spine to which L12 dimers bind in a sequential fashion forming a multimeric L10(L12)X complex. One or more lysine residues are methylated.

Functionally, forms part of the ribosomal stalk which helps the ribosome interact with GTP-bound translation factors. In Rickettsia bellii (strain OSU 85-389), this protein is Large ribosomal subunit protein uL11.